We begin with the raw amino-acid sequence, 276 residues long: Dermonecrotic toxin LvSicTox-alphaII1 (276 aa).

The active site involves His5. Positions 25 and 27 each coordinate Mg(2+). His41 (nucleophile) is an active-site residue. Cystine bridges form between Cys45-Cys51 and Cys47-Cys193. Asp85 serves as a coordination point for Mg(2+).

It belongs to the arthropod phospholipase D family. Class II subfamily. Mg(2+) is required as a cofactor. Expressed by the venom gland.

Its subcellular location is the secreted. It carries out the reaction an N-(acyl)-sphingosylphosphocholine = an N-(acyl)-sphingosyl-1,3-cyclic phosphate + choline. The enzyme catalyses an N-(acyl)-sphingosylphosphoethanolamine = an N-(acyl)-sphingosyl-1,3-cyclic phosphate + ethanolamine. The catalysed reaction is a 1-acyl-sn-glycero-3-phosphocholine = a 1-acyl-sn-glycero-2,3-cyclic phosphate + choline. It catalyses the reaction a 1-acyl-sn-glycero-3-phosphoethanolamine = a 1-acyl-sn-glycero-2,3-cyclic phosphate + ethanolamine. In terms of biological role, dermonecrotic toxins cleave the phosphodiester linkage between the phosphate and headgroup of certain phospholipids (sphingolipid and lysolipid substrates), forming an alcohol (often choline) and a cyclic phosphate. This toxin acts on sphingomyelin (SM). It may also act on ceramide phosphoethanolamine (CPE), lysophosphatidylcholine (LPC) and lysophosphatidylethanolamine (LPE), but not on lysophosphatidylserine (LPS), and lysophosphatidylglycerol (LPG). It acts by transphosphatidylation, releasing exclusively cyclic phosphate products as second products. Induces dermonecrosis, hemolysis, increased vascular permeability, edema, inflammatory response, and platelet aggregation. This Loxosceles variegata (Recluse spider) protein is Dermonecrotic toxin LvSicTox-alphaII1.